A 1031-amino-acid polypeptide reads, in one-letter code: Formin-binding protein 4 (1031 aa).

3 disordered regions span residues 1–102 (MMGK…TTRP), 116–143 (AYADSDDDESDVSEKTAQSKEANGNQAT), and 166–205 (APVVASAPPPTPPRPEPKEAATPALSPTASNGSDTAQTPG). Ser19 carries the post-translational modification Phosphoserine. Composition is skewed to low complexity over residues 41–73 (DSTAAATSQSAPAAATAAAATSPAVPASAAPED) and 83–92 (VVEVPNVVQN). A phosphoserine mark is found at Ser120, Ser125, and Ser128. A compositionally biased stretch (polar residues) spans 134–143 (SKEANGNQAT). The residue at position 176 (Thr176) is a Phosphothreonine. Over residues 190–203 (LSPTASNGSDTAQT) the composition is skewed to polar residues. Positions 218 to 252 (EIEMGDWQEVWDENTGCYYYWNTQTNEVTWELPQY) constitute a WW 1 domain. The residue at position 294 (Lys294) is an N6-acetyllysine. Lys305 is covalently cross-linked (Glycyl lysine isopeptide (Lys-Gly) (interchain with G-Cter in SUMO1)). A Glycyl lysine isopeptide (Lys-Gly) (interchain with G-Cter in SUMO2) cross-link involves residue Lys339. A Glycyl lysine isopeptide (Lys-Gly) (interchain with G-Cter in SUMO1); alternate cross-link involves residue Lys352. Lys352 participates in a covalent cross-link: Glycyl lysine isopeptide (Lys-Gly) (interchain with G-Cter in SUMO2); alternate. The disordered stretch occupies residues 355–518 (DPVSETKETS…KETEVEESSE (164 aa)). The span at 400–414 (ESEEEEEEEEQDTLE) shows a compositional bias: acidic residues. The segment covering 418-430 (ALERKKAELRALE) has biased composition (basic and acidic residues). Ser435, Ser440, Ser443, Ser446, and Ser450 each carry phosphoserine. The segment covering 436–450 (VSGSSPRSDISQPAS) has biased composition (polar residues). Positions 457–466 (IMSKRGKWKM) are enriched in basic residues. Residues 469-482 (RATSPESTSRSSSK) are compositionally biased toward low complexity. Residues Ser472, Ser507, and Ser516 each carry the phosphoserine modification. Over residues 499–518 (DSEKIDEISDKETEVEESSE) the composition is skewed to basic and acidic residues. Lys527 is covalently cross-linked (Glycyl lysine isopeptide (Lys-Gly) (interchain with G-Cter in SUMO1); alternate). Lys527 participates in a covalent cross-link: Glycyl lysine isopeptide (Lys-Gly) (interchain with G-Cter in SUMO2); alternate. One can recognise a WW 2 domain in the interval 603–637 (NATPKGWSCHWDRDHRRYFYVNEQSGESQWEFPDG). Disordered regions lie at residues 629–681 (ESQW…SLCK), 712–813 (PLPL…VQRS), and 900–994 (PAQA…RIEE). The segment covering 643 to 663 (SQTKEVRDESLPKLTVKDKTC) has biased composition (basic and acidic residues). The span at 664 to 677 (TDPNSTESSENPTG) shows a compositional bias: polar residues. The segment covering 712–741 (PLPLEMPPPPPPPPESPPPPPPPPPPPPPL) has biased composition (pro residues). Over residues 742-757 (EDGEIQEVEMEDEGSE) the composition is skewed to acidic residues. The segment covering 771–794 (KPSTQTTAVTSQSLVDSTASSPPS) has biased composition (polar residues). The span at 913–939 (VEPPPPPPPPPTPTPPPPPPAPKVPPP) shows a compositional bias: pro residues. Over residues 943-955 (RKGKKDKAKKSKT) the composition is skewed to basic residues. Acidic residues predominate over residues 971 to 984 (LDEEDNSSSSEEDR). Ser977, Ser978, and Ser979 each carry phosphoserine. Basic and acidic residues predominate over residues 985-994 (ESTAQKRIEE).

Binds FMN1. Interacts with the Arg/Gly-rich-flanked Pro-rich regions of KHDRBS1/SAM68. Arginine methylation in these regions has no effect on this binding. As to expression, ubiquitous. Highest levels in spleen and thymus.

The sequence is that of Formin-binding protein 4 (Fnbp4) from Mus musculus (Mouse).